Reading from the N-terminus, the 972-residue chain is Translation initiation factor IF-2 (972 aa).

Residues 49 to 63 (HLRKSHGATDGDKRK) show a composition bias toward basic and acidic residues. Disordered regions lie at residues 49-86 (HLRK…ARTI) and 100-383 (DDVA…TFQA). Over residues 105–114 (GAEQGQAQVA) the composition is skewed to low complexity. Residues 121–177 (ELKRREEEARREAELLEKQAQELRERQERLEREEAERRAREEAAEAERRRAEEEAAA) are compositionally biased toward basic and acidic residues. Residues 178-209 (KRAAAAAVEAQQAAAQQAAEAQQETAGAQSAQ) are compositionally biased toward low complexity. The span at 210–261 (DEARAAAERAAQREAAKKAEDAAREAADKTRAEQEEIRKRREAAEAEARAIR) shows a compositional bias: basic and acidic residues. Residues 277 to 286 (PPKPVEPPKP) are compositionally biased toward pro residues. Residues 298–327 (KPAGAGAARPAVKKPAGAAPATTQAPAGAG) are compositionally biased toward low complexity. A compositionally biased stretch (gly residues) spans 356–369 (SSGGVDRGWRGGPK). Positions 472-641 (PRPPVVTVMG…LLQAEVLELK (170 aa)) constitute a tr-type G domain. Residues 481–488 (GHVDHGKT) form a G1 region. 481 to 488 (GHVDHGKT) lines the GTP pocket. A G2 region spans residues 506–510 (GITQH). Residues 527-530 (DTPG) are G3. GTP is bound by residues 527 to 531 (DTPGH) and 581 to 584 (NKID). Residues 581-584 (NKID) are G4. Residues 617–619 (SAK) are G5.

This sequence belongs to the TRAFAC class translation factor GTPase superfamily. Classic translation factor GTPase family. IF-2 subfamily.

The protein localises to the cytoplasm. One of the essential components for the initiation of protein synthesis. Protects formylmethionyl-tRNA from spontaneous hydrolysis and promotes its binding to the 30S ribosomal subunits. Also involved in the hydrolysis of GTP during the formation of the 70S ribosomal complex. This Burkholderia ambifaria (strain MC40-6) protein is Translation initiation factor IF-2.